The following is a 1611-amino-acid chain: SH3 domain-containing protein C23A1.17 (1611 aa).

The region spanning 3–67 is the SH3 domain; the sequence is SFPTRVVALY…PKDFTEPAED (65 aa). Disordered stretches follow at residues 275–648, 662–741, 762–851, and 886–1365; these read THPA…PTSL, IDPP…PPGL, AVPR…NSLN, and TPST…FSAK. The span at 278-296 shows a compositional bias: polar residues; sequence AASSTMATESSHQSPSADS. Positions 300-312 are enriched in basic and acidic residues; it reads ELSKSQRVAKDDD. Positions 316–330 are enriched in polar residues; sequence VSNTANSDEPASSSK. Composition is skewed to acidic residues over residues 361–373 and 387–420; these read SEQEEDEYDDAES and SEPEDQDEPSEKDDENKDVEEEQEQEQEEEQIDP. Residues 421 to 433 are compositionally biased toward basic and acidic residues; sequence EEAKRIALRERMA. Residues 472-494 show a composition bias toward low complexity; it reads STTNDSSPPKDSSSTSTQPTEQS. A compositionally biased stretch (polar residues) spans 576-586; it reads TQETSEQQVHK. Basic and acidic residues predominate over residues 605–619; sequence FDKETLASNEAHEAV. The span at 637–648 shows a compositional bias: low complexity; it reads SSSVVTPSPTSL. Polar residues-rich tracts occupy residues 799–808, 886–902, and 923–940; these read SRPSTGSQLR, TPSTATFQGHPTISNVA, and ATHQSSTGLTQEITQLGS. Composition is skewed to pro residues over residues 963-974, 1022-1053, and 1076-1241; these read PAAPPSIPPPLP, PPVPLPSADAPPIPVPSTAPPVPIPTSTPPVP, and IPAP…PVPA. Over residues 1242-1278 the composition is skewed to low complexity; that stretch reads PSSEAPSVSTPRSSVPSPHSNASPSPTSSSMASAAPA. Phosphoserine is present on residues Ser-1258, Ser-1261, and Ser-1266. Residues 1300 to 1312 show a composition bias toward basic residues; sequence KSSKSGEHHHHHN. The segment covering 1317 to 1327 has biased composition (polar residues); that stretch reads DSSSTRTSLAH. Residues 1340 to 1350 show a composition bias toward low complexity; that stretch reads RSSSRASKKPS. Polar residues predominate over residues 1351–1362; sequence IVSTTGPFNESF. Ser-1379 is subject to Phosphoserine. At Thr-1380 the chain carries Phosphothreonine.

The protein localises to the cytoplasm. This is SH3 domain-containing protein C23A1.17 from Schizosaccharomyces pombe (strain 972 / ATCC 24843) (Fission yeast).